We begin with the raw amino-acid sequence, 434 residues long: Glutamyl-tRNA reductase (434 aa).

Residues 49-52 (TCNR), serine 109, 114-116 (EPQ), and glutamine 120 each bind substrate. Catalysis depends on cysteine 50, which acts as the Nucleophile. 189–194 (GAGEMC) provides a ligand contact to NADP(+).

It belongs to the glutamyl-tRNA reductase family. As to quaternary structure, homodimer.

It catalyses the reaction (S)-4-amino-5-oxopentanoate + tRNA(Glu) + NADP(+) = L-glutamyl-tRNA(Glu) + NADPH + H(+). The protein operates within porphyrin-containing compound metabolism; protoporphyrin-IX biosynthesis; 5-aminolevulinate from L-glutamyl-tRNA(Glu): step 1/2. Its function is as follows. Catalyzes the NADPH-dependent reduction of glutamyl-tRNA(Glu) to glutamate 1-semialdehyde (GSA). This is Glutamyl-tRNA reductase from Geotalea daltonii (strain DSM 22248 / JCM 15807 / FRC-32) (Geobacter daltonii).